Reading from the N-terminus, the 724-residue chain is Catalase-peroxidase (724 aa).

A cross-link (tryptophyl-tyrosyl-methioninium (Trp-Tyr) (with M-252)) is located at residues 98 to 226 (WHSAGSYRLA…LAAVQMGLIY (129 aa)). Residue His-99 is the Proton acceptor of the active site. Positions 226–252 (YVNPEGVNGKPDPLKTAAQVRTTFARM) form a cross-link, tryptophyl-tyrosyl-methioninium (Tyr-Met) (with W-98). A heme b-binding site is contributed by His-267.

It belongs to the peroxidase family. Peroxidase/catalase subfamily. Homodimer or homotetramer. Heme b serves as cofactor. Post-translationally, formation of the three residue Trp-Tyr-Met cross-link is important for the catalase, but not the peroxidase activity of the enzyme.

The enzyme catalyses H2O2 + AH2 = A + 2 H2O. The catalysed reaction is 2 H2O2 = O2 + 2 H2O. Bifunctional enzyme with both catalase and broad-spectrum peroxidase activity. The chain is Catalase-peroxidase from Maricaulis maris (strain MCS10) (Caulobacter maris).